A 343-amino-acid polypeptide reads, in one-letter code: General transcription and DNA repair factor IIH subunit TFB6 (343 aa).

Tyr-69 bears the Phosphotyrosine mark. Thr-71 and Thr-84 each carry phosphothreonine. Residues Ser-104, Ser-105, Ser-108, and Ser-342 each carry the phosphoserine modification.

In terms of assembly, component of the general transcription factor TFIIH, composed of a 7-subunit TFIIH core complex composed of XPB/SSL2, XPD/RAD3, SSL1, TFB1, TFB2, TFB4 and TFB5 which is active in NER; the 3-subunit CTD-kinase module TFIIK composed of CCL1, KIN28, and TFB3 which is active in transcription; as well as TFB6 that regulates SSL2 association with the complex. Post-translationally, phosphorylation leads the dissociation of from SSL2.

Its subcellular location is the cytoplasm. The protein localises to the nucleus. Functionally, component of the general transcription and DNA repair factor IIH (TFIIH) core complex, which is involved in general and transcription-coupled nucleotide excision repair (NER) of damaged DNA and, when complexed to TFIIK, in RNA transcription by RNA polymerase II. In NER, TFIIH acts by opening DNA around the lesion to allow the excision of the damaged oligonucleotide and its replacement by a new DNA fragment. In transcription, TFIIH has an essential role in transcription initiation. When the pre-initiation complex (PIC) has been established, TFIIH is required for promoter opening and promoter escape. Phosphorylation of the C-terminal tail (CTD) of the largest subunit of RNA polymerase II by the kinase module TFIIK controls the initiation of transcription. TFB6 facilitates dissociation of the SSL2 helicase from TFIIH after transcription initiation. The polypeptide is General transcription and DNA repair factor IIH subunit TFB6 (Saccharomyces cerevisiae (strain ATCC 204508 / S288c) (Baker's yeast)).